A 941-amino-acid polypeptide reads, in one-letter code: RNA-directed RNA polymerase (941 aa).

Residues 875-918 (SARQGGMGLPPPPPPPLGGGGMAGPPPPPFMGLRPESSVPTSVP) form a disordered region. Residues 905-918 (MGLRPESSVPTSVP) are compositionally biased toward low complexity.

Forms a ribonucleoprotein complex with the 23S RNA, where a single polymerase molecule binds to a single viral RNA genome. Since the viral RNA is not encapsidated, ribonucleoprotein complex formation appears to be the strategy to survive in the host as persistent virus.

The protein resides in the host cytoplasm. The enzyme catalyses RNA(n) + a ribonucleoside 5'-triphosphate = RNA(n+1) + diphosphate. Its function is as follows. RNA-directed RNA polymerase that replicates the viral (+) and (-) genome. The chain is RNA-directed RNA polymerase from Saccharomyces 23S RNA narnavirus (ScNV-23S).